A 424-amino-acid chain; its full sequence is Histidine--tRNA ligase (424 aa).

The segment at 1 to 22 (MSYRRPKGTYDVYPGDAARQEP) is disordered.

Belongs to the class-II aminoacyl-tRNA synthetase family. As to quaternary structure, homodimer.

The protein localises to the cytoplasm. It catalyses the reaction tRNA(His) + L-histidine + ATP = L-histidyl-tRNA(His) + AMP + diphosphate + H(+). This is Histidine--tRNA ligase from Rubrobacter xylanophilus (strain DSM 9941 / JCM 11954 / NBRC 16129 / PRD-1).